Reading from the N-terminus, the 798-residue chain is Serine/threonine-protein kinase SIK2 (798 aa).

The region spanning 26-277 is the Protein kinase domain; that stretch reads YDIERTLGKG…ISQIKQHKWM (252 aa). ATP is bound by residues 32–40 and K55; that span reads LGKGNFAVV. D148 acts as the Proton acceptor in catalysis. T181 carries the post-translational modification Phosphothreonine. S185 carries the post-translational modification Phosphoserine. Residues 302–342 enclose the UBA domain; it reads DYNEQVLGIMQTLGIDRQRTVESLQNSSYNHFAAIYYLLLE. Positions 351 to 361 are enriched in polar residues; that stretch reads QLSSRPATGRQ. Positions 351–382 are disordered; the sequence is QLSSRPATGRQQRPRSSEISNAEMPQDSLTSE. The residue at position 575 (S575) is a Phosphoserine. The tract at residues 672-691 is disordered; the sequence is ACPQTSQTSATNGLPPSDSA. Polar residues predominate over residues 673–685; that stretch reads CPQTSQTSATNGL.

It belongs to the protein kinase superfamily. CAMK Ser/Thr protein kinase family. SNF1 subfamily. It depends on Mg(2+) as a cofactor. In terms of processing, phosphorylated at Thr-181 by STK11/LKB1 in complex with STE20-related adapter-alpha (STRADA) pseudo kinase and CAB39. As to expression, ubiquitously expressed in embryonic tissue.

The protein resides in the cytoplasm. It carries out the reaction L-seryl-[protein] + ATP = O-phospho-L-seryl-[protein] + ADP + H(+). It catalyses the reaction L-threonyl-[protein] + ATP = O-phospho-L-threonyl-[protein] + ADP + H(+). With respect to regulation, activated by phosphorylation on Thr-181. Functionally, phosphorylates IRS1 in insulin-stimulated adipocytes, potentially modulating the efficiency of insulin signal transduction. Inhibits CREB activity by phosphorylating and repressing the CREB-specific coactivators, CRTC1-3. In Gallus gallus (Chicken), this protein is Serine/threonine-protein kinase SIK2 (SIK2).